Consider the following 306-residue polypeptide: Pantothenate kinase (306 aa).

ATP is bound at residue 91 to 98 (GSVAVGKS).

This sequence belongs to the prokaryotic pantothenate kinase family.

It is found in the cytoplasm. The enzyme catalyses (R)-pantothenate + ATP = (R)-4'-phosphopantothenate + ADP + H(+). It functions in the pathway cofactor biosynthesis; coenzyme A biosynthesis; CoA from (R)-pantothenate: step 1/5. This Streptococcus pyogenes serotype M18 (strain MGAS8232) protein is Pantothenate kinase (coaA).